The chain runs to 199 residues: uncharacterized protein (199 aa).

It localises to the mitochondrion. This is an uncharacterized protein from Schizosaccharomyces pombe (strain 972 / ATCC 24843) (Fission yeast).